A 457-amino-acid polypeptide reads, in one-letter code: Metacaspase-1 (457 aa).

The disordered stretch occupies residues 1 to 149; sequence MSWNQYPGGG…PQLQGQGGQS (149 aa). The span at 7 to 18 shows a compositional bias: gly residues; that stretch reads PGGGHHQQGGYG. Positions 20–56 are enriched in pro residues; that stretch reads RPPPPQWAQQGPPPPPNMGYRPPPPPQAYYNNPPPPQ. The span at 57-83 shows a compositional bias: low complexity; sequence QYQRPAPQQNGYQQGGYQQQQQSQGNY. Residues His-247 and Cys-303 contribute to the active site.

The protein belongs to the peptidase C14B family.

In terms of biological role, involved in cell death (apoptosis). This Cryptococcus neoformans var. neoformans serotype D (strain JEC21 / ATCC MYA-565) (Filobasidiella neoformans) protein is Metacaspase-1 (MCA1).